The sequence spans 601 residues: Aspartate--tRNA(Asp/Asn) ligase (601 aa).

Glu-177 contributes to the L-aspartate binding site. The tract at residues 201 to 204 (QLFK) is aspartate. Arg-223 serves as a coordination point for L-aspartate. ATP is bound by residues 223-225 (RDE) and Gln-232. Position 455 (His-455) interacts with L-aspartate. Glu-489 lines the ATP pocket. Arg-496 contacts L-aspartate. Residue 541–544 (GWDR) coordinates ATP. A disordered region spans residues 568–601 (VDPLTDAPAPIPLEQRRETGVDFKPKKKTDESAV). Basic and acidic residues predominate over residues 581-601 (EQRRETGVDFKPKKKTDESAV).

This sequence belongs to the class-II aminoacyl-tRNA synthetase family. Type 1 subfamily. As to quaternary structure, homodimer.

The protein localises to the cytoplasm. It carries out the reaction tRNA(Asx) + L-aspartate + ATP = L-aspartyl-tRNA(Asx) + AMP + diphosphate. Its function is as follows. Aspartyl-tRNA synthetase with relaxed tRNA specificity since it is able to aspartylate not only its cognate tRNA(Asp) but also tRNA(Asn). Reaction proceeds in two steps: L-aspartate is first activated by ATP to form Asp-AMP and then transferred to the acceptor end of tRNA(Asp/Asn). This Corynebacterium diphtheriae (strain ATCC 700971 / NCTC 13129 / Biotype gravis) protein is Aspartate--tRNA(Asp/Asn) ligase.